Reading from the N-terminus, the 241-residue chain is Small ribosomal subunit protein uS2 (241 aa).

This sequence belongs to the universal ribosomal protein uS2 family.

The chain is Small ribosomal subunit protein uS2 from Erwinia tasmaniensis (strain DSM 17950 / CFBP 7177 / CIP 109463 / NCPPB 4357 / Et1/99).